A 413-amino-acid chain; its full sequence is MAYEIIDNIAAEGAPYYTPAQDPPAGTQTSGSTKVFTPITIRGVTFPNRLFLAPLCQYSAKDGYATDWHLTHLGGIIQRGPGLSMVEATAVQNHGRITPQDVGLWEDGQIEPLKRITTFAHSQSQKIGIQLSHAGRKASCVSPWLSINAVAAKEVGGWPDNIVAPSAIAQEAGVNPVPKAFTKEDIEELKNDFLAAAKRAIRAGFDVIEIHAAHGYLLHQFLSPVSNQRTDEYGGSFENRIRVVLEIIDLIRGEIPETTPILVRVSATDWFEYDAQFKDEFPESWTVEQTCKLAQILPKHGVDLVDVSSGGIHPKSAIAIKAGPAYQVDLAKQVKKAVGDSVLVSAVGGIKTGHLAEEVLQSGIDVVRAGRWFQQNPGLVRAFANELGVEVKMANQIDWSFKGRGKNGHKKSP.

53 to 56 (APLC) lines the FMN pocket. Tyrosine 58 serves as a coordination point for substrate. Residues alanine 88 and glutamine 130 each contribute to the FMN site. Position 211–214 (211–214 (HAAH)) interacts with substrate. FMN contacts are provided by residues arginine 264 and 370–371 (GR).

It belongs to the NADH:flavin oxidoreductase/NADH oxidase family. NamA subfamily. It depends on FMN as a cofactor.

It participates in mycotoxin biosynthesis. Functionally, NADH:flavin oxidoreductase; part of the gene cluster that mediates the biosynthesis of butenolide, a mycotoxin that shows antibiotic activity but does not seem to play a major role in the spread of head blight in wheat. Butenolide is derived from glutamic acid via a 4-acetamido-2-butenoic acid intermediate. The predicted function of the NADH:flavin oxidoreductase FG08077, the cytochrome P450 monooxygenase FG08079, the decarboxylase FG08083, and the putative acetyltransferase FG08082 are consistent with this pathway, however, the respective activities of the butelonide biosynthesis cluster enzymes have still to be experimentally determined. This chain is NADH:flavin oxidoreductase FG08077, found in Gibberella zeae (strain ATCC MYA-4620 / CBS 123657 / FGSC 9075 / NRRL 31084 / PH-1) (Wheat head blight fungus).